A 154-amino-acid polypeptide reads, in one-letter code: Small ribosomal subunit protein uS15 (154 aa).

The segment at 1 to 23 is disordered; that stretch reads MNKKRDKGQSHSTRPARAGPPRW.

Belongs to the universal ribosomal protein uS15 family. In terms of assembly, part of the 30S ribosomal subunit.

This Staphylothermus marinus (strain ATCC 43588 / DSM 3639 / JCM 9404 / F1) protein is Small ribosomal subunit protein uS15.